The chain runs to 736 residues: 3',5'-cyclic-AMP phosphodiesterase 4B (736 aa).

Disordered regions lie at residues 51-78 (QLPP…TTLP), 189-209 (LHGT…SRVN), and 282-301 (KQND…KKKK). Serine 290 carries the phosphoserine modification. Residues 330 to 659 (VNTENEDHLA…NWYQSMIPQS (330 aa)) enclose the PDEase domain. The active-site Proton donor is histidine 406. Residue histidine 406 participates in 3',5'-cyclic AMP binding. AMP-binding residues include histidine 406 and histidine 410. 4 residues coordinate Zn(2+): histidine 410, histidine 446, aspartate 447, and aspartate 564. Positions 447, 564, 615, and 618 each coordinate AMP. Mg(2+) is bound at residue aspartate 447. Aspartate 447 provides a ligand contact to Mn(2+). Residues glutamine 615 and phenylalanine 618 each contribute to the 3',5'-cyclic AMP site. Residues serine 659 and serine 661 each carry the phosphoserine modification. The segment at 685–736 (DEEDSEGPEKEGEGHSYFSSTKTLCVIDPENRDSLGETDIDIATEDKSPVDT) is disordered.

It belongs to the cyclic nucleotide phosphodiesterase family. PDE4 subfamily. In terms of assembly, interacts with DISC1. Requires Zn(2+) as cofactor. The cofactor is Mg(2+). It depends on Mn(2+) as a cofactor. Expressed in brain, heart, lung and skeletal muscle. Expressed in white blood cells. As to expression, brain-specific isoform.

The protein resides in the cytoplasm. The protein localises to the cell membrane. The catalysed reaction is 3',5'-cyclic AMP + H2O = AMP + H(+). It participates in purine metabolism; 3',5'-cyclic AMP degradation; AMP from 3',5'-cyclic AMP: step 1/1. With respect to regulation, inhibited by rolipram. Hydrolyzes the second messenger cAMP, which is a key regulator of many important physiological processes. May be involved in mediating central nervous system effects of therapeutic agents ranging from antidepressants to antiasthmatic and anti-inflammatory agents. The sequence is that of 3',5'-cyclic-AMP phosphodiesterase 4B from Homo sapiens (Human).